The primary structure comprises 206 residues: Ribosomal RNA large subunit methyltransferase E (206 aa).

Positions 60, 62, 80, 96, and 121 each coordinate S-adenosyl-L-methionine. Lys-161 functions as the Proton acceptor in the catalytic mechanism.

This sequence belongs to the class I-like SAM-binding methyltransferase superfamily. RNA methyltransferase RlmE family.

The protein localises to the cytoplasm. The catalysed reaction is uridine(2552) in 23S rRNA + S-adenosyl-L-methionine = 2'-O-methyluridine(2552) in 23S rRNA + S-adenosyl-L-homocysteine + H(+). Specifically methylates the uridine in position 2552 of 23S rRNA at the 2'-O position of the ribose in the fully assembled 50S ribosomal subunit. The sequence is that of Ribosomal RNA large subunit methyltransferase E from Francisella tularensis subsp. tularensis (strain FSC 198).